The sequence spans 366 residues: tRNA/tmRNA (uracil-C(5))-methyltransferase (366 aa).

Q190, Y218, N223, E239, and D299 together coordinate S-adenosyl-L-methionine. C324 serves as the catalytic Nucleophile. E358 functions as the Proton acceptor in the catalytic mechanism.

This sequence belongs to the class I-like SAM-binding methyltransferase superfamily. RNA M5U methyltransferase family. TrmA subfamily.

The catalysed reaction is uridine(54) in tRNA + S-adenosyl-L-methionine = 5-methyluridine(54) in tRNA + S-adenosyl-L-homocysteine + H(+). The enzyme catalyses uridine(341) in tmRNA + S-adenosyl-L-methionine = 5-methyluridine(341) in tmRNA + S-adenosyl-L-homocysteine + H(+). In terms of biological role, dual-specificity methyltransferase that catalyzes the formation of 5-methyluridine at position 54 (m5U54) in all tRNAs, and that of position 341 (m5U341) in tmRNA (transfer-mRNA). The polypeptide is tRNA/tmRNA (uracil-C(5))-methyltransferase (Salmonella typhi).